The sequence spans 252 residues: MEGPASPARAPGALPYYVAFSQLLGLIVVAMTGAWLGMYRGGIAWESALQFNVHPLCMIIGLVFLQGDALLVYRVFRNEAKRTTKVLHGLLHVFAFVIALVGLVAVFEHHRKKGYADLYSLHSWCGILVFALFFAQWLVGFSFFLFPGASFSLRSRYRPQHVFFGAAIFLLSVATALLGLKEALLFELGTKYSMFEPEGVLANVLGLLLATFATVILYILTRADWKRPLQAEEQALSMDFKTLTEGDSPSSQ.

Methionine 1 is modified (N-acetylmethionine). Topologically, residues 1 to 17 (MEGPASPARAPGALPYY) are cytoplasmic. The helical transmembrane segment at 18–38 (VAFSQLLGLIVVAMTGAWLGM) threads the bilayer. Residues 20–221 (FSQLLGLIVV…FATVILYILT (202 aa)) form the Cytochrome b561 domain. The Vesicular segment spans residues 39–52 (YRGGIAWESALQFN). Residues 53 to 73 (VHPLCMIIGLVFLQGDALLVY) form a helical membrane-spanning segment. Histidine 54, arginine 74, and lysine 81 together coordinate heme b. Residues 74 to 86 (RVFRNEAKRTTKV) lie on the Cytoplasmic side of the membrane. Lysine 81 and lysine 85 together coordinate L-ascorbate. Residues 87-107 (LHGLLHVFAFVIALVGLVAVF) traverse the membrane as a helical segment. Heme b-binding positions include histidine 88, 117-120 (DLYS), and histidine 122. Residues 108–125 (EHHRKKGYADLYSLHSWC) are Vesicular-facing. The helical transmembrane segment at 126 to 146 (GILVFALFFAQWLVGFSFFLF) threads the bilayer. Topologically, residues 147 to 159 (PGASFSLRSRYRP) are cytoplasmic. Arginine 154 serves as a coordination point for L-ascorbate. A helical membrane pass occupies residues 160-180 (QHVFFGAAIFLLSVATALLGL). The heme b site is built by histidine 161 and glutamate 182. Over 181-199 (KEALLFELGTKYSMFEPEG) the chain is Vesicular. A helical transmembrane segment spans residues 200-220 (VLANVLGLLLATFATVILYIL). Residues 221–252 (TRADWKRPLQAEEQALSMDFKTLTEGDSPSSQ) lie on the Cytoplasmic side of the membrane. Lysine 226 serves as a coordination point for heme b. Serine 248 and serine 250 each carry phosphoserine.

The cofactor is heme b. As to expression, expressed in the adrenal medulla and all brain regions, but not in visceral organs.

It is found in the cytoplasmic vesicle. The protein resides in the secretory vesicle. It localises to the chromaffin granule membrane. The catalysed reaction is monodehydro-L-ascorbate radical(out) + L-ascorbate(in) = monodehydro-L-ascorbate radical(in) + L-ascorbate(out). Functionally, transmembrane reductase that uses ascorbate as an electron donor in the cytoplasm and transfers electrons across membranes to reduce monodehydro-L-ascorbate radical in the lumen of secretory vesicles. It is therefore involved the regeneration and homeostasis within secretory vesicles of ascorbate which in turn provides reducing equivalents needed to support the activity of intravesicular enzymes. The protein is Transmembrane ascorbate-dependent reductase CYB561 (CYB561) of Bos taurus (Bovine).